The chain runs to 223 residues: MTEVQDLHGQDSDEGSEEVVLTPAELIERLEQAWMNEKFAPELLESKSEIVECVMEQLEHMEENLRRAKKGDLKVSIHRMEMERIRYVLSSYLRCRLMKIEKFFPHILEKEKTRPAGEPSSLSPEEFVFAKEYMDHTETHFKNVALKHMPPNLQKVDLMRAVPKPDLDSYVFLRVKERQENILVEPEADEQRDYVIDLEEGSQHLIRYKTIAPLVASGAVQLI.

The residue at position 1 (Met1) is an N-acetylmethionine. Position 2 is an N-acetylthreonine; in DNA replication complex GINS protein SLD5, N-terminally processed (Thr2). Ser12 and Ser16 each carry phosphoserine. The important for GINS complex assembly stretch occupies residues 166 to 223 (DLDSYVFLRVKERQENILVEPEADEQRDYVIDLEEGSQHLIRYKTIAPLVASGAVQLI).

This sequence belongs to the GINS4/SLD5 family. As to quaternary structure, component of the CMG helicase complex, a hexameric ring of related MCM2-7 subunits stabilized by CDC45 and the tetrameric GINS complex. Associated with ORC2. Interacts with HELB.

It localises to the nucleus. Its subcellular location is the chromosome. In terms of biological role, required for initiation of chromosomal DNA replication. Core component of CDC45-MCM-GINS (CMG) helicase, the molecular machine that unwinds template DNA during replication, and around which the replisome is built. The sequence is that of DNA replication complex GINS protein SLD5 (Gins4) from Rattus norvegicus (Rat).